The chain runs to 217 residues: UPF0502 protein KPN78578_10500 (217 aa).

Belongs to the UPF0502 family.

The chain is UPF0502 protein KPN78578_10500 from Klebsiella pneumoniae subsp. pneumoniae (strain ATCC 700721 / MGH 78578).